The primary structure comprises 536 residues: Phosphoenolpyruvate carboxykinase (ATP) (536 aa).

Substrate-binding residues include Arg-61, Tyr-195, and Lys-201. Residues Lys-201, His-220, and 236–244 (GLSGTGKTT) each bind ATP. Mn(2+) contacts are provided by Lys-201 and His-220. Asp-257 serves as a coordination point for Mn(2+). ATP-binding residues include Glu-285, Arg-322, and Thr-447. Arg-322 provides a ligand contact to substrate.

It belongs to the phosphoenolpyruvate carboxykinase (ATP) family. Mn(2+) is required as a cofactor.

It localises to the cytoplasm. It catalyses the reaction oxaloacetate + ATP = phosphoenolpyruvate + ADP + CO2. The protein operates within carbohydrate biosynthesis; gluconeogenesis. Involved in the gluconeogenesis. Catalyzes the conversion of oxaloacetate (OAA) to phosphoenolpyruvate (PEP) through direct phosphoryl transfer between the nucleoside triphosphate and OAA. The protein is Phosphoenolpyruvate carboxykinase (ATP) of Agrobacterium fabrum (strain C58 / ATCC 33970) (Agrobacterium tumefaciens (strain C58)).